Here is a 197-residue protein sequence, read N- to C-terminus: Nucleoid occlusion factor SlmA (197 aa).

One can recognise an HTH tetR-type domain in the interval Ile7–Leu67. A DNA-binding region (H-T-H motif) is located at residues Thr30–Phe49.

This sequence belongs to the nucleoid occlusion factor SlmA family. Homodimer. Interacts with FtsZ.

Its subcellular location is the cytoplasm. It is found in the nucleoid. In terms of biological role, required for nucleoid occlusion (NO) phenomenon, which prevents Z-ring formation and cell division over the nucleoid. Acts as a DNA-associated cell division inhibitor that binds simultaneously chromosomal DNA and FtsZ, and disrupts the assembly of FtsZ polymers. SlmA-DNA-binding sequences (SBS) are dispersed on non-Ter regions of the chromosome, preventing FtsZ polymerization at these regions. The polypeptide is Nucleoid occlusion factor SlmA (Shewanella sp. (strain MR-7)).